The chain runs to 381 residues: ELMO domain-containing protein 3 (381 aa).

Residues 170-324 (THGRVLQTIY…DLEALAKKSP (155 aa)) form the ELMO domain.

Both isoform 1 and isoform 2 are widely expressed.

Its subcellular location is the cell projection. The protein resides in the stereocilium. It localises to the kinocilium. It is found in the cytoplasm. The protein localises to the cytoskeleton. In terms of biological role, acts as a GTPase-activating protein (GAP) for ARL2 with low specific activity. This chain is ELMO domain-containing protein 3 (Elmod3), found in Mus musculus (Mouse).